The following is a 60-amino-acid chain: Large ribosomal subunit protein bL33 (60 aa).

The protein belongs to the bacterial ribosomal protein bL33 family.

The sequence is that of Large ribosomal subunit protein bL33 from Chlorobium phaeobacteroides (strain DSM 266 / SMG 266 / 2430).